A 413-amino-acid chain; its full sequence is Serine hydroxymethyltransferase (413 aa).

Residues L117 and 121–123 (GHL) contribute to the (6S)-5,6,7,8-tetrahydrofolate site. K226 carries the N6-(pyridoxal phosphate)lysine modification. (6S)-5,6,7,8-tetrahydrofolate contacts are provided by residues E239 and 349-351 (SPF).

The protein belongs to the SHMT family. In terms of assembly, homodimer. The cofactor is pyridoxal 5'-phosphate.

The protein localises to the cytoplasm. The catalysed reaction is (6R)-5,10-methylene-5,6,7,8-tetrahydrofolate + glycine + H2O = (6S)-5,6,7,8-tetrahydrofolate + L-serine. It participates in one-carbon metabolism; tetrahydrofolate interconversion. Its pathway is amino-acid biosynthesis; glycine biosynthesis; glycine from L-serine: step 1/1. Functionally, catalyzes the reversible interconversion of serine and glycine with tetrahydrofolate (THF) serving as the one-carbon carrier. This reaction serves as the major source of one-carbon groups required for the biosynthesis of purines, thymidylate, methionine, and other important biomolecules. Also exhibits THF-independent aldolase activity toward beta-hydroxyamino acids, producing glycine and aldehydes, via a retro-aldol mechanism. This is Serine hydroxymethyltransferase from Bacillus cereus (strain ATCC 10987 / NRS 248).